A 246-amino-acid polypeptide reads, in one-letter code: MLPQPQIWLCPTDRPLIPGYQALLSSEEMARGERYQRPQDKQRFLTMRLALRILLARQLDCLPQQLQFTYGPQGKPELVDRERRSPWFNVAHSGNYGLIGLSTEGEIGVDLQIMLPKPHYLKLAKRFFAPQEVQQLESLEGEKRTKLFYQLWTAKEAFLKATGKGISGGLNQVIPDENLAKYQYLPDSGDTNHWRLSSQPLLADQGSNDNYWMAIAWCTNEVNQVESNYLPNIQPFQWPRNLDSLP.

The Mg(2+) site is built by aspartate 110 and glutamate 156.

The protein belongs to the P-Pant transferase superfamily. Gsp/Sfp/HetI/AcpT family. Requires Mg(2+) as cofactor.

Probably transfers the 4'-phosphopantetheine moiety from coenzyme A (CoA) to a serine residue of a carrier protein domain. This chain is Putative 4'-phosphopantetheinyl transferase slr0495, found in Synechocystis sp. (strain ATCC 27184 / PCC 6803 / Kazusa).